The chain runs to 142 residues: Protein SprT-like (142 aa).

The SprT-like domain maps to 4 to 138 (YVKKVSIEDF…FACGYCHGRL (135 aa)). A Zn(2+)-binding site is contributed by His-62. The active site involves Glu-63. His-66 is a binding site for Zn(2+).

This sequence belongs to the SprT family. Zn(2+) is required as a cofactor.

Its subcellular location is the cytoplasm. The chain is Protein SprT-like from Streptococcus agalactiae serotype Ia (strain ATCC 27591 / A909 / CDC SS700).